A 246-amino-acid chain; its full sequence is 2-deoxyglucose-6-phosphate phosphatase 2 (246 aa).

The Nucleophile role is filled by Asp-83. Asp-83 contributes to the Mg(2+) binding site. Residues Asp-83, Glu-92, and 146–149 (DVKN) contribute to the substrate site. Residue Asp-183 participates in Mg(2+) binding.

It belongs to the HAD-like hydrolase superfamily. DOG/GPP family. Mg(2+) serves as cofactor.

It catalyses the reaction 2-deoxy-D-glucose 6-phosphate + H2O = 2-deoxy-D-glucose + phosphate. Its function is as follows. Phosphatase that is active on 2-deoxy-D-glucose 6-phosphate (2-DOG-6P), but not very active on fructose-1-P. This is 2-deoxyglucose-6-phosphate phosphatase 2 from Saccharomyces cerevisiae (strain ATCC 204508 / S288c) (Baker's yeast).